A 492-amino-acid polypeptide reads, in one-letter code: MTLWINGDWITGQGERRRKTNPVSGEILWQGNDANAAQVAEACQAARAAFPRWARQPFAARQAIVEKFAVLLEAHKAELTEVIARETGKPRWEAATEVTAMINKIAISIKAYHARTGEQKSELVDGAATLRHRPHGVLAVFGPYNFPGHLPNGHIVPALLAGNTLIFKPSELTPWTGETVIKLWERAGLPAGVLNLVQGGRETGQALSSLDDLDGLLFTGSASTGYQLHRQLSGQPEKILALEMGGNNPLIIEDVANIDAAVHLTLQSAFITAGQRCTCARRLLVKQGAQGDAFLARLVDVAGRLQPGRWDDDPQSFIGGLISAQAAQHVMEAWRQREALGGRTLLAPRKVKEGTSLLTPGIIELTGVADVPDEEVFGPLLNVWRYAHFDEAIRLANNTRFGLSCGLVSTDRAQFEQLLLEARAGIVNWNKPLTGAASTAPFGGVGASGNHRPSAWYAADYCAWPMASLESPELTLPATLSPGLDFSRREAV.

220–225 serves as a coordination point for NAD(+); that stretch reads GSASTG. Active-site residues include E243 and C277.

This sequence belongs to the aldehyde dehydrogenase family. AstD subfamily.

It carries out the reaction N-succinyl-L-glutamate 5-semialdehyde + NAD(+) + H2O = N-succinyl-L-glutamate + NADH + 2 H(+). It functions in the pathway amino-acid degradation; L-arginine degradation via AST pathway; L-glutamate and succinate from L-arginine: step 4/5. Catalyzes the NAD-dependent reduction of succinylglutamate semialdehyde into succinylglutamate. In Salmonella heidelberg (strain SL476), this protein is N-succinylglutamate 5-semialdehyde dehydrogenase.